A 660-amino-acid chain; its full sequence is Replication restart protein PriA (660 aa).

The Helicase ATP-binding domain maps to 145-313; sequence IIGSEKTNVF…KNNQIKKIIM (169 aa). 158–165 is an ATP binding site; sequence GIPGSGKT. A DEAH box motif is present at residues 256–259; the sequence is DEEH. 8 residues coordinate Zn(2+): Cys370, Cys373, Cys379, Cys382, Cys397, Cys400, Cys410, and Cys413. In terms of domain architecture, Helicase C-terminal spans 405–557; that stretch reads KTASHCPQCE…QFYEEELDIR (153 aa).

This sequence belongs to the helicase family. PriA subfamily. As to quaternary structure, component of the replication restart primosome. Zn(2+) serves as cofactor.

The catalysed reaction is Couples ATP hydrolysis with the unwinding of duplex DNA by translocating in the 3'-5' direction.. The enzyme catalyses ATP + H2O = ADP + phosphate + H(+). Its function is as follows. Initiates the restart of stalled replication forks, which reloads the replicative helicase on sites other than the origin of replication. Recognizes and binds to abandoned replication forks and remodels them to uncover a helicase loading site. Promotes assembly of the primosome at these replication forks. The chain is Replication restart protein PriA from Borreliella burgdorferi (strain ATCC 35210 / DSM 4680 / CIP 102532 / B31) (Borrelia burgdorferi).